Here is an 888-residue protein sequence, read N- to C-terminus: E3 ubiquitin-protein ligase SH3RF1 (888 aa).

An RING-type zinc finger spans residues 12-53; sequence CPVCLERLDASAKVLPCQHTFCKRCLLGIVGSRNELRCPECR. SH3 domains lie at 134–193 and 196–259; these read PQLP…IIKP and QPPP…FNSA. The segment at 275–321 is disordered; sequence DAGECSSAAAQSSTAPKHSDTKKNTKKRHSFTSLTMANKSSQASQNR. Positions 292 to 362 are interaction with RAC1; it reads HSDTKKNTKK…APSQVHISTT (71 aa). A Phosphoserine modification is found at Ser304. Polar residues predominate over residues 305–321; that stretch reads FTSLTMANKSSQASQNR. An interaction with AKT2 region spans residues 440 to 543; that stretch reads HLRPQTRPSV…STAGGPAQKL (104 aa). Residues 445–506 enclose the SH3 3 domain; sequence TRPSVYVAIY…PGNYVAPVTR (62 aa). Disordered regions lie at residues 516–549, 617–637, and 693–741; these read VPMS…NGVA, SPAS…APLM, and PDSA…ASPT. Over residues 520–535 the composition is skewed to polar residues; that stretch reads TAGQTSRGVTMVSPST. Phosphoserine is present on Ser532. Residues 693–704 show a composition bias toward polar residues; that stretch reads PDSASLACGNSS. Basic and acidic residues predominate over residues 707–718; it reads KPDKDSKKEKKG. Ser735 carries the post-translational modification Phosphoserine. One can recognise an SH3 4 domain in the interval 829-888; it reads VVCERHRVVVSYPPQSEAELELKEGDIVFVHKKREDGWFKGTLQRNGKTGLFPGSFVENI.

Belongs to the SH3RF family. In terms of assembly, interacts with HERP1. Interacts with RAC1; in a GTP-dependent manner. Interacts with MAP3K10/MLK2 and MAP3K11/MLK3. Interacts with MAPK8IP; this interaction leads to the PJAC complex (POSH-JIP or SH3RF1/MAPK8IP apoptotic complex) with a 1:1 ratio. Interacts with SIAH1. Probably part of a signaling complex that may contain SH3RF1, MAPK8IP, DLK1, MAP2K4/MKK4, MAP2K7/MKK7, MAPK8/JNK1, MAPK9/JNK2, AKT1 and AKT2. Found in a complex with RAC2, MAP3K7/TAK1, MAP2K7/MKK7, MAPK8IP1/JIP1, MAPK8/JNK1 and MAPK9/JNK2. Found in a complex with RAC1, MAP3K11/MLK3, MAP2K7/MKK7, MAPK8IP1/JIP1 and MAPK8/JNK1. Interacts with SH3RF2. In terms of processing, phosphorylated at Ser-304 by AKT1 and AKT2. When phosphorylated, it has reduced ability to bind Rac. Autoubiquitinated. Ubiquitinated by SH3RF2, leading to proteasome-mediated degradation.

It is found in the cytoplasm. It localises to the perinuclear region. Its subcellular location is the cell projection. The protein resides in the lamellipodium. The protein localises to the golgi apparatus. It is found in the trans-Golgi network. The enzyme catalyses S-ubiquitinyl-[E2 ubiquitin-conjugating enzyme]-L-cysteine + [acceptor protein]-L-lysine = [E2 ubiquitin-conjugating enzyme]-L-cysteine + N(6)-ubiquitinyl-[acceptor protein]-L-lysine.. It participates in protein modification; protein ubiquitination. Has E3 ubiquitin-protein ligase activity. In the absence of an external substrate, it can catalyze self-ubiquitination. Stimulates ubiquitination of potassium channel KCNJ1, enhancing it's dynamin-dependent and clathrin-independent endocytosis. Acts as a scaffold protein that coordinates with MAPK8IP1/JIP1 in organizing different components of the JNK pathway, including RAC1 or RAC2, MAP3K11/MLK3 or MAP3K7/TAK1, MAP2K7/MKK7, MAPK8/JNK1 and/or MAPK9/JNK2 into a functional multiprotein complex to ensure the effective activation of the JNK signaling pathway. Regulates the differentiation of CD4(+) and CD8(+) T-cells and promotes T-helper 1 (Th1) cell differentiation. Regulates the activation of MAPK8/JNK1 and MAPK9/JNK2 in CD4(+) T-cells and the activation of MAPK8/JNK1 in CD8(+) T-cells. Controls proper cortical neuronal migration and the formation of proximal cytoplasmic dilation in the leading process (PCDLP) in migratory neocortical neurons by regulating the proper localization of activated RAC1 and F-actin assembly. The polypeptide is E3 ubiquitin-protein ligase SH3RF1 (SH3RF1) (Pongo abelii (Sumatran orangutan)).